Consider the following 553-residue polypeptide: MSKDLNSSRIKIIKPNDSYIKVDRKKDLTKYELENGKVISTKDRPIASVPAITGKIPSDEEVFDSKTGLPNHSFLREHFFHEGRLSKEQAIKILNMSTVALSKEPNLLKLKAPITICGDIHGQYYDLLKLFEVGGDPAEIDYLFLGDYVDRGAFSFECLIYLYSLKLNNLGRFWMLRGNHECKHLTSYFTFKNEMLHKYDMEVYDACCRSFNVLPLAALMNGQYFCVHGGISPELKSVEDVNKINRFREIPSRGLMCDLLWADPVENYDDARDGSEFDQSEDEFVPNSLRGCSFAFTFKASCKFLKANGLLSIIRAHEAQDAGYRMYKNNKVTGFPSLITMFSAPNYLDTYHNKAAVLKYEENVMNIRQFHMSPHPYWLPDFMDVFTWSLPFVGEKVTSMLVSILNICSEQELDPESEPKAAEETVKARANATKETGTPSDEKASSAILEDETRRKALRNKILAIAKVSRMFSVLREESEKVEYLKTMNAGVLPRGALARGTEGLNETLSTFEKARKEDLINEKLPPSLSEVEQEKIKYYEKILKGAEKKPQL.

Ser2 carries the post-translational modification N-acetylserine. Residues Asp119, His121, and Asp147 each contribute to the Fe cation site. Zn(2+) is bound by residues Asp147 and Asn179. His180 acts as the Proton donor in catalysis. His228 and His317 together coordinate Zn(2+). The segment at 413 to 447 is disordered; it reads LDPESEPKAAEETVKARANATKETGTPSDEKASSA. The span at 417–427 shows a compositional bias: basic and acidic residues; that stretch reads SEPKAAEETVK.

This sequence belongs to the PPP phosphatase family. PP-2B subfamily. As to quaternary structure, composed of two components (A and B), the A component is the catalytic subunit and the B component confers calcium sensitivity. Fe(3+) serves as cofactor. Zn(2+) is required as a cofactor.

The catalysed reaction is O-phospho-L-seryl-[protein] + H2O = L-seryl-[protein] + phosphate. It carries out the reaction O-phospho-L-threonyl-[protein] + H2O = L-threonyl-[protein] + phosphate. In terms of biological role, calcium-dependent, calmodulin-stimulated protein phosphatase. This subunit may have a role in the calmodulin activation of calcineurin. The protein is Serine/threonine-protein phosphatase 2B catalytic subunit A1 (CNA1) of Saccharomyces cerevisiae (strain ATCC 204508 / S288c) (Baker's yeast).